We begin with the raw amino-acid sequence, 93 residues long: Em protein H2 (93 aa).

The disordered stretch occupies residues 1 to 93 (MASGQQERSQ…IDESKFKTKS (93 aa)). 3 stretches are compositionally biased toward basic and acidic residues: residues 9 to 19 (SQLDRKAREGE), 31 to 52 (LEAHENLAEGRSRGGQTRREQM), and 73 to 93 (GGERAAREGIDIDESKFKTKS).

The protein belongs to the small hydrophilic plant seed protein family.

Its function is as follows. It is thought to provide protection for the cytoplasm during the desiccation stage of embryo development. This Triticum aestivum (Wheat) protein is Em protein H2 (EMH2).